The sequence spans 111 residues: Ribosome-binding factor A (111 aa).

Belongs to the RbfA family. Monomer. Binds 30S ribosomal subunits, but not 50S ribosomal subunits or 70S ribosomes.

Its subcellular location is the cytoplasm. Its function is as follows. One of several proteins that assist in the late maturation steps of the functional core of the 30S ribosomal subunit. Associates with free 30S ribosomal subunits (but not with 30S subunits that are part of 70S ribosomes or polysomes). Required for efficient processing of 16S rRNA. May interact with the 5'-terminal helix region of 16S rRNA. The sequence is that of Ribosome-binding factor A from Helicobacter pylori (strain P12).